A 498-amino-acid polypeptide reads, in one-letter code: UDP-N-acetylmuramate--L-alanine ligase (498 aa).

120–126 (GSHGKTT) provides a ligand contact to ATP.

Belongs to the MurCDEF family.

The protein resides in the cytoplasm. The catalysed reaction is UDP-N-acetyl-alpha-D-muramate + L-alanine + ATP = UDP-N-acetyl-alpha-D-muramoyl-L-alanine + ADP + phosphate + H(+). The protein operates within cell wall biogenesis; peptidoglycan biosynthesis. Its function is as follows. Cell wall formation. The protein is UDP-N-acetylmuramate--L-alanine ligase of Rickettsia typhi (strain ATCC VR-144 / Wilmington).